We begin with the raw amino-acid sequence, 435 residues long: Putative dimethyl sulfoxide reductase membrane subunit C (435 aa).

The next 11 helical transmembrane spans lie at 22 to 42 (GWLG…AYQL), 57 to 77 (WGLY…GLIL), 95 to 115 (LGVL…LPDI), 135 to 155 (VWDF…LWLL), 186 to 206 (FWTA…TGWI), 220 to 240 (LVAP…LLVV), 257 to 277 (LTSL…YLLA), 281 to 301 (LPHA…FLIG), 304 to 324 (VYFW…LATP), 333 to 353 (IFTA…RLVF), and 392 to 412 (VEIA…MAGL).

Belongs to the NrfD family. In terms of assembly, probable multiprotein complex that likely consists of DmsA, DmsB and DmsC.

It is found in the cell membrane. Its function is as follows. Dimethyl sulfoxide (DMSO) reductase catalyzes the reduction of dimethyl sulfoxide (DMSO) to dimethyl sulfide (DMS) during anaerobic respiration; it can also use trimethylamine N-oxide (TMAO) as terminal electron acceptor. Subunit C is proposed to be a membrane anchoring subunit. In Halobacterium salinarum (strain ATCC 700922 / JCM 11081 / NRC-1) (Halobacterium halobium), this protein is Putative dimethyl sulfoxide reductase membrane subunit C (dmsC).